The sequence spans 185 residues: Ribosome-recycling factor (185 aa).

Belongs to the RRF family.

It is found in the cytoplasm. In terms of biological role, responsible for the release of ribosomes from messenger RNA at the termination of protein biosynthesis. May increase the efficiency of translation by recycling ribosomes from one round of translation to another. The chain is Ribosome-recycling factor from Shewanella baltica (strain OS223).